The primary structure comprises 450 residues: tRNA modification GTPase MnmE (450 aa).

3 residues coordinate (6S)-5-formyl-5,6,7,8-tetrahydrofolate: K21, E78, and K117. One can recognise a TrmE-type G domain in the interval 213–376; it reads GHALSIIGKP…LSQKISAFFP (164 aa). N223 is a K(+) binding site. Residues 223–228, 242–248, and 267–270 contribute to the GTP site; these read NAGKSS, SDIKGTT, and DTAG. S227 lines the Mg(2+) pocket. K(+)-binding residues include S242, I244, and T247. T248 is a binding site for Mg(2+). Residue K450 participates in (6S)-5-formyl-5,6,7,8-tetrahydrofolate binding.

It belongs to the TRAFAC class TrmE-Era-EngA-EngB-Septin-like GTPase superfamily. TrmE GTPase family. As to quaternary structure, homodimer. Heterotetramer of two MnmE and two MnmG subunits. The cofactor is K(+).

It is found in the cytoplasm. Exhibits a very high intrinsic GTPase hydrolysis rate. Involved in the addition of a carboxymethylaminomethyl (cmnm) group at the wobble position (U34) of certain tRNAs, forming tRNA-cmnm(5)s(2)U34. The protein is tRNA modification GTPase MnmE of Helicobacter acinonychis (strain Sheeba).